Reading from the N-terminus, the 393-residue chain is uncharacterized protein (393 aa).

Helical transmembrane passes span 15–35 (IVAF…VTIF), 56–76 (WGWI…NVII), 86–106 (FYAS…FQIV), 131–151 (AVLI…LITW), 176–196 (LSLT…VIAF), 253–273 (LLAN…VFMI), 289–309 (LIDL…IPVA), and 349–369 (VYLP…QVIW).

The protein localises to the cell membrane. This is an uncharacterized protein from Mycoplasma genitalium (strain ATCC 33530 / DSM 19775 / NCTC 10195 / G37) (Mycoplasmoides genitalium).